We begin with the raw amino-acid sequence, 262 residues long: Small ribosomal subunit protein eS1 (262 aa).

The protein belongs to the eukaryotic ribosomal protein eS1 family. As to quaternary structure, component of the small ribosomal subunit. Mature ribosomes consist of a small (40S) and a large (60S) subunit. The 40S subunit contains about 33 different proteins and 1 molecule of RNA (18S). The 60S subunit contains about 49 different proteins and 3 molecules of RNA (25S, 5.8S and 5S).

It localises to the cytoplasm. The polypeptide is Small ribosomal subunit protein eS1 (Plasmodium vivax (strain Salvador I)).